A 53-amino-acid chain; its full sequence is Large ribosomal subunit protein bL33B (53 aa).

This sequence belongs to the bacterial ribosomal protein bL33 family.

The sequence is that of Large ribosomal subunit protein bL33B from Sorangium cellulosum (strain So ce56) (Polyangium cellulosum (strain So ce56)).